The following is a 450-amino-acid chain: UDP-N-acetylmuramoylalanine--D-glutamate ligase (450 aa).

Position 119-125 (119-125 (GSNGKTT)) interacts with ATP.

Belongs to the MurCDEF family.

Its subcellular location is the cytoplasm. The enzyme catalyses UDP-N-acetyl-alpha-D-muramoyl-L-alanine + D-glutamate + ATP = UDP-N-acetyl-alpha-D-muramoyl-L-alanyl-D-glutamate + ADP + phosphate + H(+). The protein operates within cell wall biogenesis; peptidoglycan biosynthesis. Its function is as follows. Cell wall formation. Catalyzes the addition of glutamate to the nucleotide precursor UDP-N-acetylmuramoyl-L-alanine (UMA). This Streptococcus sanguinis (strain SK36) protein is UDP-N-acetylmuramoylalanine--D-glutamate ligase.